Consider the following 710-residue polypeptide: Lactoperoxidase (710 aa).

A signal peptide spans 1–22; sequence MKVLLRLPALLASLTLLQMAAS. A propeptide spanning residues 23–98 is cleaved from the precursor; the sequence is TRNATRTATI…WEQSLKRLRR (76 aa). 3 N-linked (GlcNAc...) asparagine glycosylation sites follow: asparagine 25, asparagine 104, and asparagine 131. Residues cysteine 130 and cysteine 143 are joined by a disulfide bond. Aspartate 223 contacts heme b. Histidine 224 acts as the Proton acceptor in catalysis. Aspartate 225 serves as a coordination point for Ca(2+). Asparagine 238 carries N-linked (GlcNAc...) asparagine glycosylation. 2 disulfides stabilise this stretch: cysteine 244–cysteine 254 and cysteine 248–cysteine 272. Ca(2+)-binding residues include threonine 299, phenylalanine 301, aspartate 303, and serine 305. A Phosphoserine modification is found at serine 313. Residue asparagine 320 is glycosylated (N-linked (GlcNAc...) asparagine). Residues cysteine 352 and cysteine 363 are joined by a disulfide bond. Residues glutamate 373 and histidine 466 each contribute to the heme b site. Tyrosine 480 is subject to 3'-nitrotyrosine. Disulfide bonds link cysteine 571–cysteine 628 and cysteine 669–cysteine 694.

This sequence belongs to the peroxidase family. XPO subfamily. Ca(2+) serves as cofactor. Requires heme b as cofactor. As to expression, expressed in the lacrimal gland with higher levels and 3-fold higher activity in adult females than males and secreted into tears (at protein level).

It is found in the secreted. Its subcellular location is the cytoplasm. It catalyses the reaction 2 a phenolic donor + H2O2 = 2 a phenolic radical donor + 2 H2O. The catalysed reaction is thiocyanate + H2O2 + H(+) = hypothiocyanous acid + H2O. It carries out the reaction iodide + H2O2 = hypoiodite + H2O. Functionally, heme-containing oxidoreductase which catalyzes the conversion of thiocyanate (SCN(-)) into antimicrobial agent hypothiocyanous acid (OSCN(-)) in the presence of hydrogen peroxide (H2O2). Also involved in the conversion of iodide (I(-)) into hypoiodite (IO(-)) in the presence of H2O2. Responsible for the inactivation of a wide range of micro-organisms and hence, important component of defense mechanism. May be implicated in airway host defense against infection. May contribute to maintaining an appropriate H2O2 cellular level, therefore protecting cells from H2O2-caused injuries and inflammation. This is Lactoperoxidase (LPO) from Mesocricetus auratus (Golden hamster).